Reading from the N-terminus, the 311-residue chain is 2-phospho-L-lactate transferase (311 aa).

7,8-didemethyl-8-hydroxy-5-deazariboflavin-binding residues include D52 and R91.

Belongs to the CofD family. As to quaternary structure, homodimer. Requires Mg(2+) as cofactor.

It catalyses the reaction (2S)-lactyl-2-diphospho-5'-guanosine + 7,8-didemethyl-8-hydroxy-5-deazariboflavin = oxidized coenzyme F420-0 + GMP + H(+). It participates in cofactor biosynthesis; coenzyme F420 biosynthesis. Inhibited by EDTA in vitro. Catalyzes the transfer of the 2-phospholactate moiety from (2S)-lactyl-2-diphospho-5'-guanosine to 7,8-didemethyl-8-hydroxy-5-deazariboflavin (FO) with the formation of oxidized coenzyme F420-0 and GMP. In Methanocaldococcus jannaschii (strain ATCC 43067 / DSM 2661 / JAL-1 / JCM 10045 / NBRC 100440) (Methanococcus jannaschii), this protein is 2-phospho-L-lactate transferase.